The following is a 356-amino-acid chain: Phenylalanine--tRNA ligase alpha subunit (356 aa).

Residue E258 coordinates Mg(2+).

It belongs to the class-II aminoacyl-tRNA synthetase family. Phe-tRNA synthetase alpha subunit type 1 subfamily. In terms of assembly, tetramer of two alpha and two beta subunits. It depends on Mg(2+) as a cofactor.

Its subcellular location is the cytoplasm. The catalysed reaction is tRNA(Phe) + L-phenylalanine + ATP = L-phenylalanyl-tRNA(Phe) + AMP + diphosphate + H(+). The sequence is that of Phenylalanine--tRNA ligase alpha subunit from Macrococcus caseolyticus (strain JCSC5402) (Macrococcoides caseolyticum).